The chain runs to 588 residues: Urease subunit alpha (588 aa).

The Urease domain occupies 149–588; it reads GGIDTHIHFI…LPMAQRYFLF (440 aa). 3 residues coordinate Ni(2+): histidine 154, histidine 156, and lysine 237. An N6-carboxylysine modification is found at lysine 237. Histidine 239 provides a ligand contact to substrate. Ni(2+)-binding residues include histidine 266 and histidine 292. The Proton donor role is filled by histidine 340. Residue aspartate 380 participates in Ni(2+) binding.

This sequence belongs to the metallo-dependent hydrolases superfamily. Urease alpha subunit family. As to quaternary structure, heterotrimer of UreA (gamma), UreB (beta) and UreC (alpha) subunits. Three heterotrimers associate to form the active enzyme. Ni cation serves as cofactor. Post-translationally, carboxylation allows a single lysine to coordinate two nickel ions.

The protein localises to the cytoplasm. The enzyme catalyses urea + 2 H2O + H(+) = hydrogencarbonate + 2 NH4(+). Its pathway is nitrogen metabolism; urea degradation; CO(2) and NH(3) from urea (urease route): step 1/1. This chain is Urease subunit alpha, found in Opitutus terrae (strain DSM 11246 / JCM 15787 / PB90-1).